A 142-amino-acid polypeptide reads, in one-letter code: Large ribosomal subunit protein uL11 (142 aa).

This sequence belongs to the universal ribosomal protein uL11 family. As to quaternary structure, part of the ribosomal stalk of the 50S ribosomal subunit. Interacts with L10 and the large rRNA to form the base of the stalk. L10 forms an elongated spine to which L12 dimers bind in a sequential fashion forming a multimeric L10(L12)X complex. One or more lysine residues are methylated.

Forms part of the ribosomal stalk which helps the ribosome interact with GTP-bound translation factors. The chain is Large ribosomal subunit protein uL11 from Desulforudis audaxviator (strain MP104C).